Consider the following 348-residue polypeptide: Protein RecA (348 aa).

64–71 (GPESSGKT) serves as a coordination point for ATP. Residues 328-348 (DTGGAAPAQEDEAQAQEELEF) are disordered. Positions 336–348 (QEDEAQAQEELEF) are enriched in acidic residues.

The protein belongs to the RecA family.

It is found in the cytoplasm. Functionally, can catalyze the hydrolysis of ATP in the presence of single-stranded DNA, the ATP-dependent uptake of single-stranded DNA by duplex DNA, and the ATP-dependent hybridization of homologous single-stranded DNAs. It interacts with LexA causing its activation and leading to its autocatalytic cleavage. This chain is Protein RecA, found in Bacillus licheniformis (strain ATCC 14580 / DSM 13 / JCM 2505 / CCUG 7422 / NBRC 12200 / NCIMB 9375 / NCTC 10341 / NRRL NRS-1264 / Gibson 46).